We begin with the raw amino-acid sequence, 208 residues long: Outer-membrane lipoprotein carrier protein (208 aa).

An N-terminal signal peptide occupies residues 1 to 21 (MRLIRTLFVAALAMGTSLAHA).

The protein belongs to the LolA family. As to quaternary structure, monomer.

The protein localises to the periplasm. In terms of biological role, participates in the translocation of lipoproteins from the inner membrane to the outer membrane. Only forms a complex with a lipoprotein if the residue after the N-terminal Cys is not an aspartate (The Asp acts as a targeting signal to indicate that the lipoprotein should stay in the inner membrane). This chain is Outer-membrane lipoprotein carrier protein, found in Pseudomonas paraeruginosa (strain DSM 24068 / PA7) (Pseudomonas aeruginosa (strain PA7)).